The chain runs to 184 residues: MARSLVHDTVFYCLSVYQVKISPTPQLGAASSAEGHVGQGAPGLMGNMNPEGGVNHENGMNRDGGMIPEGGGGNQEPRQQPQPPPEEPAQAAMEGPQPENMQPRTRRTKFTLLQVEELESVFRHTQYPDVPTRRELAENLGVTEDKVRVWFKNKRARCRRHQRELMLANELRADPDDCVYIVVD.

A disordered region spans residues 26 to 104 (QLGAASSAEG…GPQPENMQPR (79 aa)). Residues 88-99 (PAQAAMEGPQPE) show a composition bias toward low complexity. A DNA-binding region (homeobox) is located at residues 103–162 (PRTRRTKFTLLQVEELESVFRHTQYPDVPTRRELAENLGVTEDKVRVWFKNKRARCRRHQ). The short motif at 155–164 (RARCRRHQRE) is the Nuclear localization signal element.

The protein belongs to the paired-like homeobox family. PEPP subfamily. Does not interact with itself. Ovary, testis and epididymis. Also detected in the prostate and the mammary gland. Expressed in many tumor cell lines derived from acute lymphocytic leukemia, prostate, endometrial adenocarcinoma, melanoma, bladder carcinoma, colon carcinoma, erythroleukemia and breast carcinoma. Not expressed in placenta. In testis, mainly expressed in germ cells, but also detected in somatic cells such as Sertoli cells, Leydig cells and peritubular cells.

The protein resides in the nucleus. Functionally, transcription factor maybe involved in reproductive processes. Modulates expression of target genes encoding proteins involved in processes relevant to spermatogenesis. The sequence is that of Rhox homeobox family member 1 from Homo sapiens (Human).